We begin with the raw amino-acid sequence, 641 residues long: RING finger containing E3 ubiquitin-protein ligase WSV403 (641 aa).

An RING-type; atypical zinc finger spans residues 329–371; that stretch reads CVGCLYDIEDEKRCYKLPCGHFMHTFCLSNKCSKANFRCVKCF.

The enzyme catalyses S-ubiquitinyl-[E2 ubiquitin-conjugating enzyme]-L-cysteine + [acceptor protein]-L-lysine = [E2 ubiquitin-conjugating enzyme]-L-cysteine + N(6)-ubiquitinyl-[acceptor protein]-L-lysine.. It participates in protein modification; protein ubiquitination. Probable E3 ubiquitin-protein ligase which accepts ubiquitin from an E2 ubiquitin-conjugating enzyme in the form of a thioester and then directly transfers the ubiquitin to targeted substrates. The protein is RING finger containing E3 ubiquitin-protein ligase WSV403 of White spot syndrome virus (isolate Shrimp/China/Tongan/1996) (WSSV).